The primary structure comprises 353 residues: tRNA-specific 2-thiouridylase MnmA 2 (353 aa).

6–13 (LLSGGVDS) contributes to the ATP binding site. An interaction with target base in tRNA region spans residues 92–94 (NPD). C97 (nucleophile) is an active-site residue. C97 and C192 form a disulfide bridge. ATP is bound at residue G120. The segment at 142 to 144 (KDQ) is interaction with tRNA. C192 functions as the Cysteine persulfide intermediate in the catalytic mechanism.

It belongs to the MnmA/TRMU family.

Its subcellular location is the cytoplasm. The catalysed reaction is S-sulfanyl-L-cysteinyl-[protein] + uridine(34) in tRNA + AH2 + ATP = 2-thiouridine(34) in tRNA + L-cysteinyl-[protein] + A + AMP + diphosphate + H(+). Catalyzes the 2-thiolation of uridine at the wobble position (U34) of tRNA, leading to the formation of s(2)U34. The protein is tRNA-specific 2-thiouridylase MnmA 2 of Bacteroides fragilis (strain ATCC 25285 / DSM 2151 / CCUG 4856 / JCM 11019 / LMG 10263 / NCTC 9343 / Onslow / VPI 2553 / EN-2).